The sequence spans 489 residues: MILTIVIIILTVIFVNKYLLNNGGKNDLRKVQGPFNLPLLGALYAFDKERFHKSFDKFYDKYKDFYFIKFGQHDCIVLNSPKLIKQVVIEQSDSVFERFHTPSIKRYAQGKSILGCSPDEWKKLRSFIVISFSKNKMGQQVLDKIFHTQYLKFENHIKKLIKSNNNIVTLEPEFKRLTISIIFNFQFGTDLEFTDPLIDSLLVCTEKIIASCQKASDLMPIFEIFTSYKDIDGVVKEMYALVKPFLEKYLKQHDRNNPKCALDHMINCILDQDEPKLITYEHLPHFLMDMFIGGTESTARTMDWFTLMMTNRKEMQDRIRTELLDVGIRLPVLVDKQKYPLLNASIKEIHRLRPIQPIIASRVVNDPIVLKHECSAKGESYTIPVGTLIIPNAHSFNFDPQYHKDPLTFNPNRYIGDNPEILHMTFDIGIRTCPFMSFAIDELFIIFSRLFQSFEFQPIDNTPISEEAFTINSIRPKQWSCQVIERDHK.

A helical transmembrane segment spans residues 1–21; it reads MILTIVIIILTVIFVNKYLLN. Position 433 (cysteine 433) interacts with heme.

The protein belongs to the cytochrome P450 family. The cofactor is heme.

The protein localises to the membrane. The sequence is that of Probable cytochrome P450 522A1 (cyp522A1) from Dictyostelium discoideum (Social amoeba).